A 254-amino-acid chain; its full sequence is Small ribosomal subunit protein uS2 (254 aa).

The interval 228-254 is disordered; that stretch reads DRGAEKEVEAAEEAPAAEAEAAPATEE. Positions 240-254 are enriched in low complexity; the sequence is EAPAAEAEAAPATEE.

The protein belongs to the universal ribosomal protein uS2 family.

The polypeptide is Small ribosomal subunit protein uS2 (Flavobacterium johnsoniae (strain ATCC 17061 / DSM 2064 / JCM 8514 / BCRC 14874 / CCUG 350202 / NBRC 14942 / NCIMB 11054 / UW101) (Cytophaga johnsonae)).